The chain runs to 527 residues: Tubulin-specific chaperone E (527 aa).

An N-acetylserine modification is found at serine 2. In terms of domain architecture, CAP-Gly spans 27 to 71; that stretch reads GVVPPVAGPWLGVEWDNPERGKHDGSHEGTVYFQCRHPTGGSFIR. LRR repeat units follow at residues 154–175, 180–200, 205–226, 230–252, 253–274, 278–299, and 308–329; these read NIRK…IHIA, HLEV…SVLT, ALKV…RCAM, GLEE…DVLQ, TVKL…YLIA, RLEQ…DAGI, and SLKY…NELD. One can recognise an LRRCT domain in the interval 342 to 384; the sequence is NPLTKEDKEAETARLLIIASIGQLKTLNKCEILPEERRRAELD. Residue lysine 463 is modified to N6-acetyllysine. Residue serine 495 is modified to Phosphoserine.

Belongs to the TBCE family. In terms of assembly, supercomplex made of cofactors A to E. Cofactors A and D function by capturing and stabilizing tubulin in a quasi-native conformation. Cofactor E binds to the cofactor D-tubulin complex; interaction with cofactor C then causes the release of tubulin polypeptides that are committed to the native state. Cofactors B and E can form a heterodimer which binds to alpha-tubulin and enhances their ability to dissociate tubulin heterodimers. Interacts with TBCD.

It localises to the cytoplasm. Its subcellular location is the cytoskeleton. Tubulin-folding protein; involved in the second step of the tubulin folding pathway and in the regulation of tubulin heterodimer dissociation. Required for correct organization of microtubule cytoskeleton and mitotic splindle, and maintenance of the neuronal microtubule network. The protein is Tubulin-specific chaperone E (TBCE) of Pongo abelii (Sumatran orangutan).